A 336-amino-acid polypeptide reads, in one-letter code: Holliday junction branch migration complex subunit RuvB (336 aa).

The interval 4–184 (ADRLISAGAT…FGIVQRLEFY (181 aa)) is large ATPase domain (RuvB-L). Residues Ile-23, Arg-24, Gly-65, Lys-68, Thr-69, Thr-70, 131 to 133 (EDY), Arg-174, Tyr-184, and Arg-221 contribute to the ATP site. Position 69 (Thr-69) interacts with Mg(2+). The interval 185 to 255 (QVPDLQHIVG…IAAQALDMLN (71 aa)) is small ATPAse domain (RuvB-S). The head domain (RuvB-H) stretch occupies residues 258–336 (AEGFDYMDRK…HFGITPPEMP (79 aa)). DNA-binding residues include Arg-294, Arg-313, and Arg-318.

This sequence belongs to the RuvB family. In terms of assembly, homohexamer. Forms an RuvA(8)-RuvB(12)-Holliday junction (HJ) complex. HJ DNA is sandwiched between 2 RuvA tetramers; dsDNA enters through RuvA and exits via RuvB. An RuvB hexamer assembles on each DNA strand where it exits the tetramer. Each RuvB hexamer is contacted by two RuvA subunits (via domain III) on 2 adjacent RuvB subunits; this complex drives branch migration. In the full resolvosome a probable DNA-RuvA(4)-RuvB(12)-RuvC(2) complex forms which resolves the HJ.

It is found in the cytoplasm. The catalysed reaction is ATP + H2O = ADP + phosphate + H(+). The RuvA-RuvB-RuvC complex processes Holliday junction (HJ) DNA during genetic recombination and DNA repair, while the RuvA-RuvB complex plays an important role in the rescue of blocked DNA replication forks via replication fork reversal (RFR). RuvA specifically binds to HJ cruciform DNA, conferring on it an open structure. The RuvB hexamer acts as an ATP-dependent pump, pulling dsDNA into and through the RuvAB complex. RuvB forms 2 homohexamers on either side of HJ DNA bound by 1 or 2 RuvA tetramers; 4 subunits per hexamer contact DNA at a time. Coordinated motions by a converter formed by DNA-disengaged RuvB subunits stimulates ATP hydrolysis and nucleotide exchange. Immobilization of the converter enables RuvB to convert the ATP-contained energy into a lever motion, pulling 2 nucleotides of DNA out of the RuvA tetramer per ATP hydrolyzed, thus driving DNA branch migration. The RuvB motors rotate together with the DNA substrate, which together with the progressing nucleotide cycle form the mechanistic basis for DNA recombination by continuous HJ branch migration. Branch migration allows RuvC to scan DNA until it finds its consensus sequence, where it cleaves and resolves cruciform DNA. This Salmonella arizonae (strain ATCC BAA-731 / CDC346-86 / RSK2980) protein is Holliday junction branch migration complex subunit RuvB.